We begin with the raw amino-acid sequence, 731 residues long: MVKPKYKGRSTINPSKASTNPDRVQGAGGQNMRDRATIRRLNMYRQKERRNSRGKIIKPLQYQSTVASGTVARVEPNIKWFGNTRVIKQSSLQKFQEEMDTVMKDPYKVVMKQSKLPMSLLHDRIRPHNLKVHILDTESFETTFGPKSQRKRPNLFASDMQSLIENAEMSTESYDQGKDRDLVTEDTGVRNEAQEEIYKKGQSKRIWGELYKVIDSSDVVVQVLDARDPMGTRSPHIETYLKKEKPWKHLIFVLNKCDLVPTWATKRWVAVLSQDYPTLAFHASLTNPFGKGAFIQLLRQFGKLHTDKKQISVGFIGYPNVGKSSVINTLRSKKVCNVAPIAGETKVWQYITLMRRIFLIDCPGVVYPSEDSETDIVLKGVVQVEKIKSPEDHIGAVLERAKPEYISKTYKIDSWENAEDFLEKLAFRTGKLLKGGEPDLQTVGKMVLNDWQRGRIPFFVKPPNAEPLVAPQLLPSSSLEVVPEAAQNNPGEEVTETAGEGSESIIKEETEENSHCDANTEMQQILTRVRQNFGKINVVPQFSGDDLVPVEVSDLEEELESFSDEEEEEQEQQRDDAEESSSEPEEENVGNDTKAVIKALDEKIAKYQKFLDKAKAKKFSAVRISKGLSEKIFAKPEEQRKTLEEDVDDRAPSKKGKKRKAQREEEQEHSNKAPRALTSKERRRAVRQQRPKKVGVRYYETHNVKNRNRNKKKTNDSEGQKHKRKKFRQKQ.

Met1 carries the N-acetylmethionine modification. The segment at 1-33 is disordered; that stretch reads MVKPKYKGRSTINPSKASTNPDRVQGAGGQNMR. Residues 10–22 are compositionally biased toward polar residues; that stretch reads STINPSKASTNPD. Residues 207-368 form the CP-type G domain; the sequence is WGELYKVIDS…LIDCPGVVYP (162 aa). GTP is bound by residues 317-324 and 361-365; these read GYPNVGKS and DCPGV. Residues 481–502 form a disordered region; the sequence is VVPEAAQNNPGEEVTETAGEGS. Residue Ser504 is modified to Phosphoserine. The segment covering 555–589 has biased composition (acidic residues); it reads LEEELESFSDEEEEEQEQQRDDAEESSSEPEEENV. 2 disordered regions span residues 555-594 and 630-731; these read LEEE…NDTK and EKIF…RQKQ. 2 stretches are compositionally biased toward basic and acidic residues: residues 630–652 and 662–671; these read EKIF…DRAP and QREEEQEHSN. Basic residues-rich tracts occupy residues 681–695 and 721–731; these read ERRR…KKVG and KHKRKKFRQKQ.

Belongs to the TRAFAC class YlqF/YawG GTPase family. NOG2 subfamily. As to quaternary structure, interacts with LYAR and RPL23A. Interacts with the nuclear importin-beta receptor and, at a lower extent, with importin-alpha. Widely expressed, with the highest expression level in testis.

The protein localises to the nucleus. It is found in the nucleolus. GTPase that associates with pre-60S ribosomal subunits in the nucleolus and is required for their nuclear export and maturation. May promote cell proliferation possibly by increasing p53/TP53 protein levels, and consequently those of its downstream product CDKN1A/p21, and decreasing RPL23A protein levels. The protein is Nucleolar GTP-binding protein 2 (GNL2) of Homo sapiens (Human).